A 782-amino-acid chain; its full sequence is Endonuclease MutS2 (782 aa).

An ATP-binding site is contributed by 336–343; that stretch reads GPNTGGKT. One can recognise a Smr domain in the interval 707 to 782; the sequence is LDLRGYRYED…GFGVTVATLK (76 aa).

The protein belongs to the DNA mismatch repair MutS family. MutS2 subfamily. In terms of assembly, homodimer. Binds to stalled ribosomes, contacting rRNA.

Its function is as follows. Endonuclease that is involved in the suppression of homologous recombination and thus may have a key role in the control of bacterial genetic diversity. Functionally, acts as a ribosome collision sensor, splitting the ribosome into its 2 subunits. Detects stalled/collided 70S ribosomes which it binds and splits by an ATP-hydrolysis driven conformational change. Acts upstream of the ribosome quality control system (RQC), a ribosome-associated complex that mediates the extraction of incompletely synthesized nascent chains from stalled ribosomes and their subsequent degradation. Probably generates substrates for RQC. The polypeptide is Endonuclease MutS2 (Staphylococcus aureus (strain COL)).